The following is a 756-amino-acid chain: Phosphoinositide 3-kinase regulatory subunit 6 (756 aa).

Disordered stretches follow at residues 570-589 (SKSPKEGSSPRRRGAAEGTG) and 716-738 (CSRTQKSKTSALNSHGQETEKNM). A compositionally biased stretch (polar residues) spans 717–731 (SRTQKSKTSALNSHG).

In terms of assembly, heterodimer of a catalytic subunit (PIK3CG) and a regulatory (PIK3R6) subunit. The binding of PIK3R6 to PIK3CG may exclude the binding of PIK3R5 to PIK3CG. Interacts with beta-gamma G protein dimers. Interacts with PDE3B and RAPGEF3; form a signaling complex that regulates phosphatidylinositol 3-kinase gamma in angiogenesis. As to expression, highly expressed in heart. In a lower extent, also expressed in brain, spleen, lung, liver, kidney, prostate, thyroid, salivary gland, dendritic cells, macrophages and neutrophils.

It is found in the cytoplasm. The protein resides in the cell membrane. In terms of biological role, regulatory subunit of the PI3K gamma complex. Acts as an adapter to drive activation of PIK3CG by beta-gamma G protein dimers. The PIK3CG:PIK3R6 heterodimer is much less sensitive to beta-gamma G proteins than PIK3CG:PIK3R5 and its membrane recruitment and beta-gamma G protein dimer-dependent activation requires HRAS bound to PIK3CG. Recruits of the PI3K gamma complex to a PDE3B:RAPGEF3 signaling complex involved in angiogenesis; signaling seems to involve RRAS. This is Phosphoinositide 3-kinase regulatory subunit 6 (Pik3r6) from Mus musculus (Mouse).